The following is a 1422-amino-acid chain: DNA-directed RNA polymerase subunit beta (1422 aa).

Residues 1392–1422 (QAAREAAERDLGGGPLGAPRGAVASGEKSSA) are disordered.

This sequence belongs to the RNA polymerase beta chain family. In terms of assembly, the RNAP catalytic core consists of 2 alpha, 1 beta, 1 beta' and 1 omega subunit. When a sigma factor is associated with the core the holoenzyme is formed, which can initiate transcription.

The enzyme catalyses RNA(n) + a ribonucleoside 5'-triphosphate = RNA(n+1) + diphosphate. In terms of biological role, DNA-dependent RNA polymerase catalyzes the transcription of DNA into RNA using the four ribonucleoside triphosphates as substrates. This is DNA-directed RNA polymerase subunit beta from Anaeromyxobacter dehalogenans (strain 2CP-1 / ATCC BAA-258).